The sequence spans 800 residues: MAATRTASRACEIFTTLEYGPAPESHACALAWLDTQDRHLGHYVNGQWLKPEHRSSVPCQDPITGENLASCLQAQSEDVAAAVEAARASLENWSTQPGAIRAQHLTRLAKVIQKHQRLLWTLESLVTGRAVREVRDRDVPLAQQLLQYHAVQAHTQEEALAGWEPMGVIGLILSPTFPFLDMMWRICPALAVGCTVVVLVPPASPTPLLLAQLAGELGPFPGILNVISGPASLGPVLAAQPGVQKVAFCGAIEEGRALRRTLAGWVPELGLALGAESLLLLTEVADVDSAVEGIVDAAWSDRSPGGLRLLIQEAVWDETMRRLQERMGRLRCGHGLDGAVDMGARGAAARDLAQRYVSEAQSQGAQVFQAGSEPSDSPFFPPTLVSDLPPASPCTQAEVPWPLVVASPFRTAKEALAVANGTPRGGSASVWSERLGQALELAYGLQVGTVWINAHGLRDPAVPTGGCKESGSSWHGGQDGLYEYLRPSGTPAWIPYLSKTLNYDAFGLALPSTLPAGPETGPAPPYGLFVGGRFQAPGARSSRPIQDSQGSLQGYVAEGGAKDIRGAVEAAHQAAPGWMSQSPAARAALLWALAAALQRREPNLVSRLERHGVELKVAKAEVELSVKRLRAWGARVQAQGCALQVAELRGPVLRLREPLGVLAIVCPDEWPLLAFVSLLAPALAHGNTVVLVPSGACPIPALEVCQEMATLLPAGLVNVVTGDRDHLTRCLALHQDIQALWYFGSAQGSQFVEWASAGNLKPVWVNRGCPRAWDQEAEGAGPELGRRAARTKALWLPMGD.

This sequence belongs to the aldehyde dehydrogenase family. As to quaternary structure, interacts with SPG21.

The chain is Aldehyde dehydrogenase family 16 member A1 (ALDH16A1) from Bos taurus (Bovine).